We begin with the raw amino-acid sequence, 210 residues long: Protein LURP-one-related 5 (210 aa).

Belongs to the LOR family.

In terms of biological role, might be related to the phospholipid scramblase and tubby-like superfamily of membrane tethered transcription factors. In Arabidopsis thaliana (Mouse-ear cress), this protein is Protein LURP-one-related 5.